A 677-amino-acid chain; its full sequence is DNA ligase (677 aa).

NAD(+) is bound by residues 34-38, 84-85, and E118; these read DAQYD and SL. K120 acts as the N6-AMP-lysine intermediate in catalysis. 4 residues coordinate NAD(+): R141, E176, K283, and K307. C403, C406, C421, and C427 together coordinate Zn(2+). Residues 594 to 677 form the BRCT domain; sequence ETASPISGKT…DLLKTVSNSE (84 aa).

It belongs to the NAD-dependent DNA ligase family. LigA subfamily. Requires Mg(2+) as cofactor. It depends on Mn(2+) as a cofactor.

It catalyses the reaction NAD(+) + (deoxyribonucleotide)n-3'-hydroxyl + 5'-phospho-(deoxyribonucleotide)m = (deoxyribonucleotide)n+m + AMP + beta-nicotinamide D-nucleotide.. DNA ligase that catalyzes the formation of phosphodiester linkages between 5'-phosphoryl and 3'-hydroxyl groups in double-stranded DNA using NAD as a coenzyme and as the energy source for the reaction. It is essential for DNA replication and repair of damaged DNA. The protein is DNA ligase of Anaplasma phagocytophilum (strain HZ).